The sequence spans 342 residues: MKRVFLWLIFVLAFHKLLAEKIGDIASVVGVRDNQLIGYGLVIGLNGTGDKSGSKFTMQSISNMLESVNVKISADDIKSKNVAAVMITASLPPFARQGDKIDIHISSIGDAKSIQGGTLVMTPLNAVDGNIYALAQGAITSGNSNNLLSANIINGATIEREVSYDLFHKNAMVLSLKSPNFKNAIQVQNTLNKVFGNKVAIALDPKTIQITRPERFSMVEFLALVQEIPINYSAKNKIIVDEKSGTIISGVDIMVHPIVVTSQDITLKITKEPLNNSKNTQDLDNNMSLDTAHNTLSSNGKNITIAGVVKALQKIGVSAKGMVSILQALKKSGAISAEMEIL.

The N-terminal stretch at 1-19 is a signal peptide; the sequence is MKRVFLWLIFVLAFHKLLA.

It belongs to the FlgI family. The basal body constitutes a major portion of the flagellar organelle and consists of four rings (L,P,S, and M) mounted on a central rod.

It is found in the periplasm. The protein localises to the bacterial flagellum basal body. Its function is as follows. Assembles around the rod to form the L-ring and probably protects the motor/basal body from shearing forces during rotation. This Helicobacter pylori (strain P12) protein is Flagellar P-ring protein.